An 80-amino-acid chain; its full sequence is Serine palmitoyltransferase small subunit A-A (80 aa).

Residues 1–21 (MKVLCEDVNGPRSSLGRAWSH) lie on the Cytoplasmic side of the membrane. The chain crosses the membrane as a helical span at residues 22 to 38 (MSWLYYQYLLVTALYML). Over 39–43 (EPWER) the chain is Lumenal. The chain crosses the membrane as a helical span at residues 44–66 (TVFNSMLVSIVGMALYTGYIFMP). At 67–80 (QHILAILHYFEIVQ) the chain is on the cytoplasmic side.

The protein belongs to the SPTSS family. SPTSSA subfamily. Component of the serine palmitoyltransferase (SPT) complex, which is composed of SPTLC1, SPTLC2 or SPTLC3 and SPTSSA or SPTSSB. The heterodimer consisting of SPTLC1 and SPTLC2/SPTLC3 forms the catalytic core of the enzyme, while SPTSSA or SPTSSB subunits determine substrate specificity. SPT also interacts with ORMDL proteins, especially ORMDL3, which negatively regulate SPT activity in the presence of ceramides.

Its subcellular location is the endoplasmic reticulum membrane. It functions in the pathway lipid metabolism; sphingolipid metabolism. Component of the serine palmitoyltransferase multisubunit enzyme (SPT) that catalyzes the initial and rate-limiting step in sphingolipid biosynthesis by condensing L-serine and activated acyl-CoA (most commonly palmitoyl-CoA) to form long-chain bases. The SPT complex is composed of SPTLC1, SPTLC2 or SPTLC3 and SPTSSA or SPTSSB. Within this complex, the heterodimer consisting of SPTLC1 and SPTLC2/SPTLC3 forms the catalytic core. Within the SPT complex, SPTSSA stimulates the catalytic activity and plays a role in substrate specificity, which depends upon the overall complex composition. The SPTLC1-SPTLC2-SPTSSA complex shows a strong preference for C16-CoA substrate, while the SPTLC1-SPTLC3-SPTSSA isozyme uses both C14-CoA and C16-CoA as substrates, with a slight preference for C14-CoA. Independently of its action as a SPT component, may be involved in MBOAT7 localization to mitochondria-associated membranes, a membrane bridge between the endoplasmic reticulum and mitochondria, may hence affect MBOAT7-catalyzed incorporation of arachidonic acid into phosphatidylinositol. This Xenopus laevis (African clawed frog) protein is Serine palmitoyltransferase small subunit A-A (sptssa-a).